A 321-amino-acid chain; its full sequence is Endochitinase 1 (321 aa).

Positions 1–21 (MSFRALSVFSLFLSYLILGSA) are cleaved as a signal peptide. Positions 22–64 (EQCGRQAGGALCPGGLCCSQFGWCGNTDDYCKKENGCQSQCSG) constitute a Chitin-binding type-1 domain. 7 cysteine pairs are disulfide-bonded: Cys24–Cys39, Cys33–Cys45, Cys38–Cys52, Cys58–Cys62, Cys93–Cys156, Cys167–Cys175, and Cys274–Cys306. The segment at 65 to 98 (SGGDTGGLDSLITRERFDQMLLHRNDGGCPARGF) is hinge. A catalytic region spans residues 99–321 (YTYDAFIAAA…YNNGPSVDSM (223 aa)). The active-site Proton donor is the Glu137.

The protein belongs to the glycosyl hydrolase 19 family. Chitinase class I subfamily.

Its subcellular location is the vacuole. The enzyme catalyses Random endo-hydrolysis of N-acetyl-beta-D-glucosaminide (1-&gt;4)-beta-linkages in chitin and chitodextrins.. Functionally, defense against chitin-containing fungal pathogens. In Theobroma cacao (Cacao), this protein is Endochitinase 1 (CHIA1).